The primary structure comprises 164 residues: Interferon gamma (164 aa).

The N-terminal stretch at 1–19 (MTCQTYNLFVLSVIMIYYG) is a signal peptide. Residues N42 and N61 are each glycosylated (N-linked (GlcNAc...) asparagine).

It belongs to the type II (or gamma) interferon family. Homodimer.

It is found in the secreted. Functionally, produced by lymphocytes activated by specific antigens or mitogens. IFN-gamma, in addition to having antiviral activity, has important immunoregulatory functions. It is a potent activator of macrophages, it has antiproliferative effects on transformed cells and it can potentiate the antiviral and antitumor effects of the type I interferons. The sequence is that of Interferon gamma (IFNG) from Phasianus colchicus colchicus (Black-necked pheasant).